The sequence spans 286 residues: MAEARTSRWYFGGLASCGAACCTHPLDLLKVHLQTQQEVKLRMTGMALQVVRTDGFLALYNGLSASLCRQMTYSLTRFAIYETMRDYMTKDSQGPLPFYSKVLLGGISGLTGGFVGTPADLVNVRMQNDMKLPLSQRRNYSHALDGLYRVAREEGLKKLFSGATMASSRGALVTVGQLSCYDQAKQLVLSTGYLSDNIFTHFLSSFIAGGCATFLCQPLDVLKTRLMNSKGEYQGVFHCAVETAKLGPQAFFKGLVPAGVRLVPHTVLTFMFLEQLRKHFGIKVAT.

Solcar repeat units lie at residues 7–87, 100–187, and 196–279; these read SRWY…MRDY, SKVL…AKQL, and DNIF…LRKH. The next 3 membrane-spanning stretches (helical) occupy residues 9 to 29, 62 to 81, and 102 to 122; these read WYFGGLASCGAACCTHPLDLL, GLSASLCRQMTYSLTRFAIY, and VLLGGISGLTGGFVGTPADLV. K158 is modified (N6-acetyllysine). Helical transmembrane passes span 162–181, 202–222, and 254–274; these read GATMASSRGALVTVGQLSCY, FLSSFIAGGCATFLCQPLDVL, and GLVPAGVRLVPHTVLTFMFLE.

It belongs to the mitochondrial carrier (TC 2.A.29) family. As to expression, expressed most strongly in liver, then kidney, and at lower levels in heart and brain.

Its subcellular location is the mitochondrion inner membrane. The enzyme catalyses (S)-malate(in) + phosphate(out) = (S)-malate(out) + phosphate(in). It catalyses the reaction malonate(out) + (S)-malate(in) = malonate(in) + (S)-malate(out). It carries out the reaction (S)-malate(in) + succinate(out) = (S)-malate(out) + succinate(in). The catalysed reaction is (S)-malate(in) + sulfate(out) = (S)-malate(out) + sulfate(in). The enzyme catalyses malonate(out) + phosphate(in) = malonate(in) + phosphate(out). It catalyses the reaction succinate(out) + phosphate(in) = succinate(in) + phosphate(out). It carries out the reaction sulfate(out) + phosphate(in) = sulfate(in) + phosphate(out). The catalysed reaction is malonate(out) + succinate(in) = malonate(in) + succinate(out). In terms of biological role, catalyzes the electroneutral exchange or flux of physiologically important metabolites such as dicarboxylates (malonate, malate, succinate), inorganic sulfur-containing anions, and phosphate, across mitochondrial inner membrane. Plays an important role in gluconeogenesis, fatty acid metabolism, urea synthesis, and sulfur metabolism, particularly in liver, by supplying the substrates for the different metabolic processes. Regulates fatty acid release from adipocytes, and contributes to systemic insulin sensitivity. The sequence is that of Mitochondrial dicarboxylate carrier from Rattus norvegicus (Rat).